The following is a 455-amino-acid chain: MLLELLLASVLGFVIYWFVSGDKEESLPLEDGWWGPGSRPVGLEDESIRPFKVETSDEEINDLHQRIDRIRLTPPLENSRFHYGFNSNYLKKILSYWRHEFDWKKQVEILNSYPHFKTKIEGLDIHFIHVKPPQVPPGRTPKPLLMVHGWPGSFFEFYKIIPLLTDPKSHGLSDEHIFEVICPSIPGYGFSQASSKKGFNSVSTARIFYKLMLRLGFQEFYIQGGDWGALVCTNMAQLVPSHVKGLHLNMALILRNHYTLTLLLGRRIGGLLGYTERDMELLYPFKEKVFYSLMRESGYMHIRATKPDTVGCALNDSPVGLAAYILEKFSTWTNSEFRDLEDGGLERKFSLQDLLTNIMIYWTTGSIVSSQRYYKENLGQGFMAHKHERLKVHVPTGFAAFPCEIMHVPEKWVRTKYPQLISYSYMPRGGHFAAFEEPELLARDICKFVGLVERQ.

A helical; Signal-anchor for type III membrane protein transmembrane segment spans residues 1–21; the sequence is MLLELLLASVLGFVIYWFVSG. The Cytoplasmic portion of the chain corresponds to 22-455; sequence DKEESLPLED…CKFVGLVERQ (434 aa). Residue Asp226 is the Nucleophile of the active site. The residue at position 295 (Arg295) is a Dimethylated arginine. Tyr374 functions as the Proton donor in the catalytic mechanism. His431 functions as the Proton acceptor in the catalytic mechanism.

The protein belongs to the peptidase S33 family.

Its subcellular location is the microsome membrane. It is found in the endoplasmic reticulum membrane. The catalysed reaction is cis-stilbene oxide + H2O = (1R,2R)-hydrobenzoin. It carries out the reaction 1-(4-methoxyphenyl)-N-methyl-N-[(3-methyloxetan-3-yl)methyl]methanamine + H2O = 2-{[(4-methoxybenzyl)(methyl)amino]methyl}-2-methylpropane-1,3-diol. It catalyses the reaction 8,9-epoxy-(5Z,11Z,14Z)-eicosatrienoate + H2O = 8,9-dihydroxy-(5Z,11Z,14Z)-eicosatrienoate. The enzyme catalyses 11,12-epoxy-(5Z,8Z,14Z)-eicosatrienoate + H2O = 11,12-dihydroxy-(5Z,8Z,14Z)-eicosatrienoate. The catalysed reaction is 2-(5Z,8Z,11Z,14Z-eicosatetraenoyl)-glycerol + H2O = glycerol + (5Z,8Z,11Z,14Z)-eicosatetraenoate + H(+). With respect to regulation, inhibited by 10-hydroxystearamide and methoxy-arachidonyl fluorophosphate. Its function is as follows. Biotransformation enzyme that catalyzes the hydrolysis of arene and aliphatic epoxides to less reactive and more water soluble dihydrodiols by the trans addition of water. May play a role in the metabolism of endogenous lipids such as epoxide-containing fatty acids. Metabolizes the abundant endocannabinoid 2-arachidonoylglycerol (2-AG) to free arachidonic acid (AA) and glycerol. Binds 20(S)-hydroxycholesterol (20(S)-OHC). This is Epoxide hydrolase 1 (EPHX1) from Oryctolagus cuniculus (Rabbit).